The following is a 505-amino-acid chain: Lysine--tRNA ligase (505 aa).

Residues Glu-415 and Glu-422 each contribute to the Mg(2+) site.

The protein belongs to the class-II aminoacyl-tRNA synthetase family. As to quaternary structure, homodimer. The cofactor is Mg(2+).

The protein resides in the cytoplasm. It catalyses the reaction tRNA(Lys) + L-lysine + ATP = L-lysyl-tRNA(Lys) + AMP + diphosphate. This chain is Lysine--tRNA ligase, found in Shigella flexneri.